A 260-amino-acid polypeptide reads, in one-letter code: Indole-3-glycerol phosphate synthase (260 aa).

The protein belongs to the TrpC family.

The enzyme catalyses 1-(2-carboxyphenylamino)-1-deoxy-D-ribulose 5-phosphate + H(+) = (1S,2R)-1-C-(indol-3-yl)glycerol 3-phosphate + CO2 + H2O. The protein operates within amino-acid biosynthesis; L-tryptophan biosynthesis; L-tryptophan from chorismate: step 4/5. The sequence is that of Indole-3-glycerol phosphate synthase from Koribacter versatilis (strain Ellin345).